We begin with the raw amino-acid sequence, 228 residues long: CD302 antigen (228 aa).

The first 20 residues, methionine 1 to alanine 20, serve as a signal peptide directing secretion. The Extracellular portion of the chain corresponds to aspartate 21–histidine 165. Residues phenylalanine 30–leucine 149 enclose the C-type lectin domain. Asparagine 107 is a glycosylation site (N-linked (GlcNAc...) asparagine). The cysteines at positions 125 and 140 are disulfide-linked. Residues isoleucine 166–isoleucine 186 traverse the membrane as a helical segment. The Cytoplasmic portion of the chain corresponds to tryptophan 187–aspartate 228.

The protein localises to the membrane. The protein resides in the cell projection. It localises to the filopodium. Its subcellular location is the cytoplasm. It is found in the cell cortex. The protein localises to the microvillus. In terms of biological role, potential multifunctional C-type lectin receptor that may play roles in endocytosis and phagocytosis as well as in cell adhesion and migration. The polypeptide is CD302 antigen (Cd302) (Mus musculus (Mouse)).